We begin with the raw amino-acid sequence, 144 residues long: Large ribosomal subunit protein uL15 (144 aa).

The interval 1–44 (MNLNELQPAAGSRKLRNRVGRGTSSGNGKTSGRGQKGQKARGKV) is disordered. A compositionally biased stretch (gly residues) spans 23–35 (TSSGNGKTSGRGQ).

The protein belongs to the universal ribosomal protein uL15 family. As to quaternary structure, part of the 50S ribosomal subunit.

Binds to the 23S rRNA. This chain is Large ribosomal subunit protein uL15, found in Leuconostoc citreum (strain KM20).